A 255-amino-acid chain; its full sequence is H-2 class II histocompatibility antigen, E-U alpha chain (255 aa).

The first 25 residues, 1-25, serve as a signal peptide directing secretion; it reads MATIGALLLRFFFIAVLMSSQKSWA. An alpha-1 region spans residues 26-109; it reads IKEEHTIIQA…KRSNNTPDAN (84 aa). Topologically, residues 26 to 217 are extracellular; that stretch reads IKEEHTIIQA…KTLLPETKEN (192 aa). The alpha-2 stretch occupies residues 110–203; it reads VAPEVTVLSR…GLEEPLRKHW (94 aa). Positions 112–204 constitute an Ig-like C1-type domain; it reads PEVTVLSRSP…LEEPLRKHWE (93 aa). Cysteine 132 and cysteine 188 are disulfide-bonded. An N-linked (GlcNAc...) asparagine glycan is attached at asparagine 143. The tract at residues 204–216 is connecting peptide; sequence EFEEKTLLPETKE. Residues 218-238 form a helical membrane-spanning segment; it reads VVCALGLFVGLVGIVVGIILI. Residues 239 to 255 are Cytoplasmic-facing; the sequence is MKGIKKRNVVERRQGAL.

It belongs to the MHC class II family.

The protein localises to the membrane. The chain is H-2 class II histocompatibility antigen, E-U alpha chain (H2-Ea) from Mus musculus (Mouse).